Here is a 625-residue protein sequence, read N- to C-terminus: tRNA uridine 5-carboxymethylaminomethyl modification enzyme MnmG (625 aa).

FAD contacts are provided by residues 13-18 (GGGHAG), Val-125, and Ser-182. 276–290 (GPRYCPSIEDKITRF) lines the NAD(+) pocket. Gln-373 contacts FAD.

It belongs to the MnmG family. As to quaternary structure, homodimer. Heterotetramer of two MnmE and two MnmG subunits. FAD serves as cofactor.

The protein localises to the cytoplasm. Functionally, NAD-binding protein involved in the addition of a carboxymethylaminomethyl (cmnm) group at the wobble position (U34) of certain tRNAs, forming tRNA-cmnm(5)s(2)U34. In Lactococcus lactis subsp. cremoris (strain MG1363), this protein is tRNA uridine 5-carboxymethylaminomethyl modification enzyme MnmG.